The following is a 644-amino-acid chain: Threonine--tRNA ligase (644 aa).

The TGS domain occupies 1-61 (MINVTLPDGS…DGDAQVAIIT (61 aa)). The catalytic stretch occupies residues 243-536 (DHRKLGKQME…LIESYAGKLP (294 aa)). C336, H387, and H513 together coordinate Zn(2+).

This sequence belongs to the class-II aminoacyl-tRNA synthetase family. Homodimer. Zn(2+) is required as a cofactor.

Its subcellular location is the cytoplasm. It carries out the reaction tRNA(Thr) + L-threonine + ATP = L-threonyl-tRNA(Thr) + AMP + diphosphate + H(+). Its function is as follows. Catalyzes the attachment of threonine to tRNA(Thr) in a two-step reaction: L-threonine is first activated by ATP to form Thr-AMP and then transferred to the acceptor end of tRNA(Thr). Also edits incorrectly charged L-seryl-tRNA(Thr). The chain is Threonine--tRNA ligase from Maricaulis maris (strain MCS10) (Caulobacter maris).